The following is a 2493-amino-acid chain: MEKVHVDIEEDSPFLRALQRSFPQFEVEAKQVTDNDHANARAFSHLASKLIETEVDPSDTILDIGSAPARRMYSKHKYHCICPMRCAEDPDRLYKYATKLKKNCKEITDKELDKKMKELAAVMSDPDLETETMCLHDDESCRYEGQVAVYQDVYAVDGPTSLYHQANKGVRVAYWIGFDTTPFMFKNLAGAYPSYSTNWADETVLTARNIGLCSSDVMERSRRGMSILRKKYLKPSNNVLFSVGSTIYHEKRDLLRSWHLPSVFHLRGKQNYTCRCETIVSCDGYVVKRIAISPGLYGKPSGYAATMHREGFLCCKVTDTLNGERVSFPVCTYVPATLCDQMTGILATDVSADDAQKLLVGLNQRIVVNGRTQRNTNTMKNYLLPVVAQAFARWAKEYKEDQEDERPLGLRDRQLVMGCCWAFRRHKITSIYKRPDTQTIIKVNSDFHSFVLPRIGSNTLEIGLRTRIRKMLEEHKEPSPLITAEDIQEAKCAADEAKEVREAEELRAALPPLAADFEEPTLEADVDLMLQEAGAGSVETPRGLIKVTSYAGEDKIGSYAVLSPQAVLKSEKLSCIHPLAEQVIVITHSGRKGRYAVEPYHGKVVVPEGHAIPVQDFQALSESATIVYNEREFVNRYLHHIATHGGALNTDEEYYKTVKPSEHDGEYLYDIDRKQCVKKELVTGLGLTGELVDPPFHEFAYESLRTRPAAPYQVPTIGVYGVPGSGKSGIIKSAVTKKDLVVSAKKENCAEIIRDVKKMKGLDVNARTVDSVLLNGCKHPVETLYIDEAFACHAGTLRALIAIIRPKKAVLCGDPKQCGFFNMMCLKVHFNHEICTQVFHKSISRRCTKSVTSVVSTLFYDKRMRTTNPKETKIVIDTTGSTKPKQDDLILTCFRGWVKQLQIDYKGNEIMTAAASQGLTRKGVYAVRYKVNENPLYAPTSEHVNVLLTRTEDRIVWKTLAGDPWIKILTAKYPGNFTATIEEWQAEHDAIMRHILERPDPTDVFQNKANVCWAKALVPVLKTAGIDMTTEQWNTVDYFETDKAHSAEIVLNQLCVRFFGLDLDSGLFSAPTVPLSIRNNHWDNSPSPNMYGLNKEVVRQLSRRYPQLPRAVATGRVYDMNTGTLRNYDPRINLVPVNRRLPHALVLHHNEHPQSDFSSFVSKLKGRTVLVVGEKLSVPGKKVDWLSDQPEATFRARLDLGIPGDVPKYDIVFINVRTPYKYHHYQQCEDHAIKLSMLTKKACLHLNPGGTCVSIGYGYADRASESIIGAIARQFKFSRVCKPKSSHEETEVLFVFIGYDRKARTHNPYKLSSTLTNIYTGSRLHEAGCAPSYHVVRGDIATATEGVIINAANSKGQPGGGVCGALYKKFPESFDLQPIEVGKARLVKGAAKHIIHAVGPNFNKVSEVEGDKQLAEAYESIAKIVNDNNYKSVAIPLLSTGIFSGNKDRLTQSLNHLLTALDTTDADVAIYCRDKKWEMTLKEAVARREAVEEICISDDSSVTEPDAELVRVHPKSSLAGRKGYSTSDGKTFSYLEGTKFHQAAKDIAEINAMWPVATEANEQVCMYILGESMSSIRSKCPVEESEASTPPSTLPCLCIHAMTPERVQRLKASRPEQITVCSSFPLPKYRITGVQKIQCSQPILFSPKVPAYIHPRKYLVETPPVEETPESPAENQSTEGTPEQPALVNVDATRTRMPEPIIIEEEEEDSISLLSDGPTHQVLQVEADIHGSPSVSSSSWSIPHASDFDVDSLSILDTLDGASVTSGAVSAETNSYFARSMEFRARPVPAPRTVFRNPPHPAPRTRTPPLAHSRASSRTSLVSTPPGVNRVITREELEALTPSRAPSRSASRTSLVSNPPGVNRVITREEFEAFVAQQQXRFDAGAYIFSSDTGQGHLQQKSVRQTVLSEVVLERTELEISYAPRLDQEKEELLRKKLQLNPTPANRSRYQSRRVENMKAITARRILQGLGHYLKAEGKVECYRTLHPVPLYSSSVNRAFSSPKVAVEACNAMLKENFPTVASYCIIPEYDAYLDMVDGASCCLDTASFCPAKLRSFPKKHSYLEPTIRSAVPSAIQNTLQNVLAAATKRNCNVTQMRELPVLDSAAFNVECFKKYACNNEYWETFKENPIRLTEENVVNYITKLKGPKAAALFAKTHNLNMLQDIPMDRFVMDLKRDVKVTPGTKHTEERPKVQVIQAADPLATADLCGIHRELVRRLNAVLLPNIHTLFDMSAEDFDAIIAEHFQPGDCVLETDIASFDKSEDDAMALTALMILEDLGVDAELLTLIEAAFGEISSIHLPTKTKFKFGAMMKSGMFLTLFVNTVINIVIASRVLRERLTGSPCAAFIGDDNIVKGVKSDKLMADRCATWLNMEVKIIDAVVGEKAPYFCGGFILCDSVTGTACRVADPLKRLFKLGKPLAVDDEHDDDRRRALHEESTRWNRVGILPELCKAVESRYETVGTSIIVMAMTTLASSVKSFSYLRGAPITLYG.

The region spanning 28–259 is the Alphavirus-like MT domain; sequence EAKQVTDNDH…EKRDLLRSWH (232 aa). A nsP1 membrane-binding region spans residues 244–263; it reads GSTIYHEKRDLLRSWHLPSV. C419 carries the S-palmitoyl cysteine; by host lipid modification. In terms of domain architecture, (+)RNA virus helicase ATP-binding spans 690-841; the sequence is ELVDPPFHEF…HEICTQVFHK (152 aa). Residue 721–728 participates in a ribonucleoside 5'-triphosphate binding; that stretch reads GVPGSGKS. The (+)RNA virus helicase C-terminal domain maps to 842-990; the sequence is SISRRCTKSV…IEEWQAEHDA (149 aa). The region spanning 1003–1322 is the Peptidase C9 domain; it reads DVFQNKANVC…STLTNIYTGS (320 aa). The segment at 1004–1023 is nucleolus localization signal; that stretch reads VFQNKANVCWAKALVPVLKT. C1012 serves as the catalytic For cysteine protease nsP2 activity. Positions 1056–1065 match the Nuclear export signal motif; sequence VRFFGLDLDS. Catalysis depends on H1081, which acts as the For cysteine protease nsP2 activity. Positions 1179 to 1183 match the Nuclear localization signal motif; the sequence is PGKKV. In terms of domain architecture, Macro spans 1330–1489; it reads APSYHVVRGD…TLKEAVARRE (160 aa). The ADP-D-ribose site is built by D1339, N1353, G1361, G1441, I1442, and F1443. The Zn(2+) site is built by C1596, C1598, C1621, and C1639. Disordered stretches follow at residues 1664 to 1684 and 1790 to 1826; these read PVEETPESPAENQSTEGTPEQ and APRTVFRNPPHPAPRTRTPPLAHSRASSRTSLVSTPP. Over residues 1814 to 1823 the composition is skewed to polar residues; sequence RASSRTSLVS. Repeat copies occupy residues 1818 to 1839 and 1852 to 1873. Residues 1818-1873 form a 2 X 21 AA approximate repeats, binding to host FXR family members region; it reads RTSLVSTPPGVNRVITREELEALTPSRAPSRSASRTSLVSNPPGVNRVITREEFEA. The region spanning 2250–2365 is the RdRp catalytic domain; it reads DCVLETDIAS…KGVKSDKLMA (116 aa).

Interacts with non-structural protein 3. Interacts with RNA-directed RNA polymerase nsP4. Interacts with protease nsP2. interacts with itself. As to quaternary structure, interacts with mRNA-capping enzyme nsP1. Interacts with host DDX1. Interacts with host DDX3. Interacts (via C-terminus) with host FXR1; this interaction inhibits the formation of host stress granules on viral mRNAs and the nsp3-FXR1 complexes bind viral RNAs and probably orchestrate the assembly of viral replication complexes. Interacts (via C-terminus) with host FXR2; this interaction inhibits the formation of host stress granules on viral mRNAs and the nsp3-FXR2 complexes bind viral RNAs and probably orchestrate the assembly of viral replication complexes. Interacts (via C-terminus) with host FMR1; this interaction inhibits the formation of host stress granules on viral mRNAs and the nsp3-FMR1 complexes bind viral RNAs and probably orchestrate the assembly of viral replication complexes. In terms of assembly, interacts with mRNA-capping enzyme nsP1. Interacts with protease nsP2. interacts with itself. Interacts with RNA-directed RNA polymerase nsP4. Interacts with mRNA-capping enzyme nsP1. Interacts with KPNA1/karyopherin-alpha1; this interaction probably allows the active transport of protease nsP2 into the host nucleus. Mg(2+) is required as a cofactor. The cofactor is Mn(2+). Post-translationally, specific enzymatic cleavages in vivo yield mature proteins. The processing of the polyprotein is temporally regulated. In early stages (1.7 hpi), P1234 is first cleaved in trans through its nsP2 protease activity, releasing P123' and nsP4, which associate to form the early replication complex. At the same time, P1234 is also cut at the nsP1/nsP2 site early in infection but with lower efficiency. After replication of the viral minus-strand RNAs (4 hpi), the polyproteins are cut at the nsP1/nsP2 and nsP2/nsP3 sites very efficiently, preventing accumulation of P123' and P1234 and allowing the formation of the late replication complex. NsP3'/nsP4 site is not cleaved anymore and P34 is produced rather than nsP4. Specific enzymatic cleavages in vivo yield mature proteins. The processing of the polyprotein is temporally regulated. In early stages (1.7 hpi), P123 is cleaved at the nsP1/nsP2 site with low efficiency. After replication of the viral minus-strand RNAs (4 hpi), the polyproteins are cut at the nsP1/nsP2 and nsP2/nsP3 sites very efficiently, preventing accumulation of P123 and allowing the formation of the late replication complex. In terms of processing, specific enzymatic cleavages in vivo yield mature proteins. The processing of the polyprotein is temporally regulated. In early stages (1.7 hpi), P123' is cleaved at the nsP1/nsP2 site with low efficiency. After replication of the viral minus-strand RNAs (4 hpi), the polyproteins are cut at the nsP1/nsP2 and nsP2/nsP3 sites very efficiently, preventing accumulation of P123' and allowing the formation of the late replication complex. Post-translationally, palmitoylated by host palmitoyltransferases ZDHHC2 and ZDHHC19. Phosphorylated by host on serines and threonines. In terms of processing, ubiquitinated; targets the protein for rapid degradation via the ubiquitin system. Nsp4 is present in extremely low quantities due to low frequency of translation through the amber stop-codon and the degradation by the ubiquitin pathway.

The protein localises to the host cytoplasmic vesicle membrane. It is found in the host cell membrane. The protein resides in the host cell projection. Its subcellular location is the host filopodium. It localises to the host nucleus. The protein localises to the host cytoplasm. It catalyses the reaction GTP + S-adenosyl-L-methionine = N(7)-methyl-GTP + S-adenosyl-L-homocysteine. It carries out the reaction N(7)-methyl-GTP + L-histidyl-[protein] = N(tele)-(N(7)-methylguanosine 5'-phospho)-L-histidyl-[protein] + diphosphate. The catalysed reaction is N(tele)-(N(7)-methylguanosine 5'-phospho)-L-histidyl-[protein] + a 5'-end diphospho-(purine-ribonucleoside) in mRNA + H(+) = a 5'-end (N(7)-methyl 5'-triphosphoguanosine)-(purine-ribonucleoside) in mRNA + L-histidyl-[protein]. The enzyme catalyses a 5'-end triphospho-ribonucleoside in mRNA + H2O = a 5'-end diphospho-ribonucleoside in mRNA + phosphate + H(+). It catalyses the reaction a ribonucleoside 5'-triphosphate + H2O = a ribonucleoside 5'-diphosphate + phosphate + H(+). It carries out the reaction ATP + H2O = ADP + phosphate + H(+). The catalysed reaction is RNA(n) + a ribonucleoside 5'-triphosphate = RNA(n+1) + diphosphate. The enzyme catalyses 4-O-(ADP-D-ribosyl)-L-aspartyl-[protein] + H2O = L-aspartyl-[protein] + ADP-D-ribose + H(+). It catalyses the reaction 5-O-(ADP-D-ribosyl)-L-glutamyl-[protein] + H2O = L-glutamyl-[protein] + ADP-D-ribose + H(+). It carries out the reaction RNA(n) + ATP = RNA(n)-3'-adenine ribonucleotide + diphosphate. The catalysed reaction is ADP-alpha-D-ribose 1''-phosphate + H2O = ADP-D-ribose + phosphate. Inhibited by sinefungin. Inactive precursor of the viral replicase, which is activated by cleavages carried out by the viral protease nsP2. Functionally, the early replication complex formed by the polyprotein P123 and nsP4 synthesizes the minus-strand RNAs (antigenome). Polyprotein P123 is a short-lived polyprotein that accumulates during early stage of infection. As soon P123 is cleaved into mature proteins, the plus-strand RNAs synthesis begins. Its function is as follows. The early replication complex formed by the polyprotein P123' and nsP4 synthesizes minus-strand RNAs (antigenome). Polyprotein P123' is a short-lived polyprotein that accumulates during early stage of infection. As soon P123' is cleaved into mature proteins, the plus-strand RNAs synthesis begins. In terms of biological role, cytoplasmic capping enzyme that catalyzes two virus-specific reactions: methyltransferase and nsP1 guanylyltransferase. mRNA-capping is necessary since all viral RNAs are synthesized in the cytoplasm, and host capping enzymes are restricted to the nucleus. The enzymatic reaction involves a covalent link between 7-methyl-GMP and nsP1, whereas eukaryotic capping enzymes form a covalent complex only with GMP. NsP1 capping consists in the following reactions: GTP is first methylated into 7-methyl-GMP and then is covalently linked to nsP1 to form the m7GMp-nsP1 complex from which 7-methyl-GMP complex is transferred to the mRNA to create the cap structure. NsP1 is also needed for the initiation of the minus-strand RNAs synthesis. Probably serves as a membrane anchor for the replication complex composed of nsP1-nsP4. Nsp1 is needed for the initiation of the minus-strand RNAs synthesis. Palmitoylated nsP1 is remodeling host cell cytoskeleton, and induces filopodium-like structure formation at the surface of the host cell. Multifunctional protein whose N-terminus is part of the RNA polymerase complex and displays NTPase, RNA triphosphatase and helicase activities. NTPase and RNA triphosphatase are involved in viral RNA capping and helicase keeps a check on the dsRNA replication intermediates. The C-terminus harbors a protease that specifically cleaves the polyproteins and releases the mature proteins. Required for the shutoff of minus-strand RNAs synthesis. Inhibits host translation to ensure maximal viral gene expression and evade host immune response. Functionally, seems to be essential for minus-strand RNAs and subgenomic 26S mRNAs synthesis. Displays mono-ADP-ribosylhydrolase activity. ADP-ribosylation is a post-translational modification that controls various processes of the host cell and the virus probably needs to revert it for optimal viral replication. Binds proteins of FXR family and sequesters them into the viral RNA replication complexes thereby inhibiting the formation of host stress granules on viral mRNAs. The nsp3-FXR complexes bind viral RNAs and probably orchestrate the assembly of viral replication complexes, thanks to the ability of FXR family members to self-assemble and bind DNA. Its function is as follows. Seems to be essential for minus-strand RNAs and subgenomic 26S mRNAs synthesis. Displays mono-ADP-ribosylhydrolase activity. ADP-ribosylation is a post-translational modification that controls various processes of the host cell and the virus probably needs to revert it for optimal viral replication. Binds proteins of FXR family and sequesters them into the viral RNA replication complexes thereby inhibiting the formation of host stress granules on viral mRNAs. The nsp3'-FXR complexes bind viral RNAs and probably orchestrate the assembly of viral replication complexes, thanks to the ability of FXR family members to self-assemble and bind DNA. In terms of biological role, RNA dependent RNA polymerase. Replicates genomic and antigenomic RNA by recognizing replications specific signals. The early replication complex formed by the polyprotein P123 and nsP4 synthesizes minus-strand RNAs. The late replication complex composed of fully processed nsP1-nsP4 is responsible for the production of genomic and subgenomic plus-strand RNAs. This chain is Polyprotein P1234, found in Bos taurus (Bovine).